Consider the following 432-residue polypeptide: Calcium uptake protein 2, mitochondrial (432 aa).

The transit peptide at methionine 1–leucine 22 directs the protein to the mitochondrion. In terms of domain architecture, EF-hand 1 spans lysine 169–glutamine 204. The Ca(2+) site is built by aspartate 182, aspartate 184, asparagine 186, methionine 188, glutamate 190, and glutamate 193. Serine 202 is subject to Phosphoserine. The EF-hand 2; degenerate domain occupies glutamate 224 to glutamate 259. The EF-hand 3; degenerate domain occupies threonine 290 to leucine 325. The EF-hand 4 domain maps to leucine 359–arginine 394. The Ca(2+) site is built by aspartate 372, aspartate 374, aspartate 376, cysteine 378, and glutamate 383.

The protein belongs to the MICU1 family. MICU2 subfamily. As to quaternary structure, heterodimer; disulfide-linked; heterodimerizes with MICU1. Component of the uniplex complex, composed of MCU, EMRE/SMDT1, MICU1 and MICU2 in a 4:4:1:1 stoichiometry. As to expression, predominantly expressed in stomach, intestine, skeletal muscle, kidney, heart, testis, prostate and uterus.

It localises to the mitochondrion intermembrane space. The protein resides in the mitochondrion inner membrane. Calcium sensor of the mitochondrial calcium uniporter (MCU) channel, which senses calcium level via its EF-hand domains. MICU1 and MICU2 form a disulfide-linked heterodimer that stimulates and inhibits MCU activity, depending on the concentration of calcium. At low calcium levels, MICU1 occludes the pore of the MCU channel, preventing mitochondrial calcium uptake. At higher calcium levels, calcium-binding to MICU1 and MICU2 induces a conformational change that weakens MCU-MICU1 interactions and moves the MICU1-MICU2 heterodimer away from the pore, allowing calcium permeation through the MCU channel. This Mus musculus (Mouse) protein is Calcium uptake protein 2, mitochondrial.